A 137-amino-acid chain; its full sequence is Small ribosomal subunit protein uS11 (137 aa).

Positions 116–137 (EDVTPIPHDGTRPKGGRRGRRV) are disordered.

This sequence belongs to the universal ribosomal protein uS11 family. Part of the 30S ribosomal subunit.

Its function is as follows. Located on the platform of the 30S subunit. This is Small ribosomal subunit protein uS11 from Pyrococcus abyssi (strain GE5 / Orsay).